The following is a 345-amino-acid chain: Protein CHROMOSOME TRANSMISSION FIDELITY 7 (345 aa).

The CCHH-type zinc-finger motif lies at 96 to 120 (RHCAECGAKYAPGDELDEKNHQSFH).

Belongs to the acetyltransferase family. ECO subfamily. In terms of processing, autoacetylated. As to expression, expressed in roots, stems, leaves, young seedlings and flower buds. Detected in the embryo, but not in the endosperm.

It is found in the nucleus. Its subcellular location is the cytoplasm. Acetyltransferase required for the establishment of sister chromatid cohesion. Involved in preservation of genome integrity and meiosis. Required for DNA repair and for the regulation of chromosome segregation during mitotic cell division. Knock-down mutants are extremely dwarf. Regulator of sister chromatid cohesion in meiosis which negatively regulates cohesin association with chromatin, acting as an antagonist of WAPL1 and WAPL2. The sequence is that of Protein CHROMOSOME TRANSMISSION FIDELITY 7 from Arabidopsis thaliana (Mouse-ear cress).